Reading from the N-terminus, the 1215-residue chain is DNA-directed RNA polymerase subunit beta' (1215 aa).

Residues C60, C62, C75, and C78 each contribute to the Zn(2+) site. Residues D449, D451, and D453 each coordinate Mg(2+). Zn(2+) is bound by residues C818, C892, C899, and C902.

It belongs to the RNA polymerase beta' chain family. As to quaternary structure, the RNAP catalytic core consists of 2 alpha, 1 beta, 1 beta' and 1 omega subunit. When a sigma factor is associated with the core the holoenzyme is formed, which can initiate transcription. Requires Mg(2+) as cofactor. Zn(2+) serves as cofactor.

It catalyses the reaction RNA(n) + a ribonucleoside 5'-triphosphate = RNA(n+1) + diphosphate. In terms of biological role, DNA-dependent RNA polymerase catalyzes the transcription of DNA into RNA using the four ribonucleoside triphosphates as substrates. The chain is DNA-directed RNA polymerase subunit beta' from Limosilactobacillus fermentum (strain NBRC 3956 / LMG 18251) (Lactobacillus fermentum).